Reading from the N-terminus, the 379-residue chain is Zinc finger protein 883 (379 aa).

C2H2-type zinc fingers lie at residues 13 to 35 (YLCT…QKTH), 41 to 63 (YECK…QRIH), 69 to 91 (YECN…QRVH), 97 to 119 (YECN…ERIH), 125 to 147 (YPCN…HRIH), 153 to 175 (YECT…QGIH), 181 to 203 (YQCK…QRTH), 209 to 231 (YECN…QRIH), 237 to 259 (YECN…QRTH), 265 to 287 (YVCK…LKIH), 293 to 315 (YQCN…QRTH), 321 to 343 (YQCN…KRIH), and 349 to 371 (YQCT…QKTH).

It belongs to the krueppel C2H2-type zinc-finger protein family.

The protein localises to the nucleus. In terms of biological role, may be involved in transcriptional regulation. This is Zinc finger protein 883 (ZNF883) from Homo sapiens (Human).